A 491-amino-acid polypeptide reads, in one-letter code: Mitochondrial distribution and morphology protein 12 (491 aa).

Positions 1–491 constitute an SMP-LTD domain; it reads MSIDLNWEAA…VFPSYWTFLV (491 aa). The span at 72 to 82 shows a compositional bias: acidic residues; it reads ESDSSEDEDGE. 3 disordered regions span residues 72–123, 201–313, and 389–434; these read ESDS…NHHD, GWPD…MRER, and GDED…QPRR. Composition is skewed to basic and acidic residues over residues 83-123 and 213-229; these read GHDA…NHHD and MTDH…HNKN. Residues 230 to 249 show a composition bias toward polar residues; the sequence is ETGSPSRPSTAHTNPTQLSH. A compositionally biased stretch (low complexity) spans 252–262; that stretch reads SAASSSNNTSN. The segment covering 270 to 279 has biased composition (polar residues); it reads DHTSSTTATT. Over residues 400-421 the composition is skewed to low complexity; that stretch reads STANTTTAASGSSTDNNNNNNE.

Belongs to the MDM12 family. As to quaternary structure, component of the ER-mitochondria encounter structure (ERMES) or MDM complex, composed of mmm1, mdm10, mdm12 and mdm34. A mmm1 homodimer associates with one molecule of mdm12 on each side in a pairwise head-to-tail manner, and the SMP-LTD domains of mmm1 and mdm12 generate a continuous hydrophobic tunnel for phospholipid trafficking.

The protein localises to the mitochondrion outer membrane. The protein resides in the endoplasmic reticulum membrane. Functionally, component of the ERMES/MDM complex, which serves as a molecular tether to connect the endoplasmic reticulum (ER) and mitochondria. Components of this complex are involved in the control of mitochondrial shape and protein biogenesis, and function in nonvesicular lipid trafficking between the ER and mitochondria. Mdm12 is required for the interaction of the ER-resident membrane protein mmm1 and the outer mitochondrial membrane-resident beta-barrel protein mdm10. The mdm12-mmm1 subcomplex functions in the major beta-barrel assembly pathway that is responsible for biogenesis of all mitochondrial outer membrane beta-barrel proteins, and acts in a late step after the SAM complex. The mdm10-mdm12-mmm1 subcomplex further acts in the TOM40-specific pathway after the action of the mdm12-mmm1 complex. Essential for establishing and maintaining the structure of mitochondria and maintenance of mtDNA nucleoids. This chain is Mitochondrial distribution and morphology protein 12, found in Talaromyces stipitatus (strain ATCC 10500 / CBS 375.48 / QM 6759 / NRRL 1006) (Penicillium stipitatum).